The chain runs to 289 residues: uncharacterized protein (289 aa).

The region spanning 1-58 (MDEKDWILLKILHEEQSVTKTAERLFTSQPSITYRLKKIEEIFGIELFTKRHKGITFT) is the HTH lysR-type domain. Residues 18-37 (VTKTAERLFTSQPSITYRLK) constitute a DNA-binding region (H-T-H motif).

The protein belongs to the LysR transcriptional regulatory family.

This is an uncharacterized protein from Bacillus subtilis (strain 168).